Here is a 403-residue protein sequence, read N- to C-terminus: uncharacterized protein (403 aa).

A compositionally biased stretch (polar residues) spans 55–88 (LTGSPNPQATPKQENKSNFFSEKQSVRENGNSSA). Residues 55-95 (LTGSPNPQATPKQENKSNFFSEKQSVRENGNSSAGEKKQKW) are disordered. Position 58 is a phosphoserine (Ser-58). A J domain is found at 113–177 (QYYEILDLKK…NLRAHYDRTG (65 aa)). The helical transmembrane segment at 263–283 (SIFYQLLPLIVVILFAFLSNF) threads the bilayer.

Its subcellular location is the endoplasmic reticulum membrane. This is an uncharacterized protein from Schizosaccharomyces pombe (strain 972 / ATCC 24843) (Fission yeast).